Reading from the N-terminus, the 831-residue chain is MECIERLRRKRTEYLFKNFIMIKFSFFNYRINMRNFHATSLRFIKFNYSAIKNIRNFSTEKKSEPKLSLFLTNISKILSEHKKDLYKAQEIIETEWLKLATPSIDVKSDIKSTMYAKQRLIHGRAFDLLKLYKSNGNLNKISKSLKDYIVNEKFIFIAWSYLLASYSKSSLPNLDYRIGYSITRHIYRESYKNDFMSFEDFPEYNKFDLGFFVKLGDIFINTFTSPLNPIFERVFENEIYSLKINKEYEYEIMESLVISPKALPMVCPPLIWWHGIRGGSVINLNDNADDSLVVGSFHHSHKIAISDKLYSVINKLNAFKFKINADLLSYLQNEGSFIIDFYKKTKKDTYINNMITLDIAKTYLNTPFYLNVNIDWRGRIYTQSFYLGYQGSELSLALINLFEGQKLDEEGLFFFYVYGANIYNEGGKFSKKSFQDRFNWVVENLDNIIAMDKDFILKAESPTLFAAFCLTMRKLKENPDHPVFNPIFLDATCSGVQHFAAMLLDLELGKYVNLINSGESVNDFYSQLIPAINKAINESAEKKLKNVKFSDISLNRSLLKKVIMTKSYNVTTYGITEQLKSKLEKVEKIIISKGKEIKVYDYLVPTKNGKFVVLDTFEVETLASIINDNIFNQFPKLHSIYEYLTRLTKIYLKLDIPISCSTPDGLELTQRYNLSKVQKLTINFLGKNRTAVLRSWVSDKDSRREVPAIIPNIIHSLDAAHLPMLIDSWDSYILPIHDCFGTHPNDMFKLAEQVRECFILLYSKNDFLSKIDSKFRENLKDYKIEIVNKNGEDFVKIKGTPRYDYLPLPVLPQMGELNVEDIRDMGKYMIS.

Catalysis depends on residues aspartate 490, lysine 560, and aspartate 738.

The protein belongs to the phage and mitochondrial RNA polymerase family.

The protein localises to the mitochondrion. The enzyme catalyses RNA(n) + a ribonucleoside 5'-triphosphate = RNA(n+1) + diphosphate. DNA-dependent RNA polymerase catalyzes the transcription of DNA into RNA using the four ribonucleoside triphosphates as substrates. The protein is Probable DNA-directed RNA polymerase of Gelasinospora sp. (strain G114).